The primary structure comprises 308 residues: ABC transporter protein AbcA (308 aa).

The 240-residue stretch at 6-245 (LAVSGVNKSF…YHKLLHMEGD (240 aa)) folds into the ABC transporter domain. An ATP-binding site is contributed by 58 to 65 (GHNGAGKS).

It belongs to the ABC transporter superfamily.

Its function is as follows. Influences the expression of the surface array protein gene (vapA). May have both regulatory and transport activities. In Aeromonas salmonicida, this protein is ABC transporter protein AbcA (abcA).